The sequence spans 296 residues: MANVLCNRARLVSYLPGFCSLVKRVVNPKAFSTAGSSGSDESHVAAAPPDICSRTVWPDETMGPFGPQDQRFQLPGNIGFDCHLNGTASQKKSLVHKTLPDVLAEPLSSERHEFVMAQYVNEFQGNDAPVEQEINSAETYFESARVECAIQTCPELLRKDFESLFPEVANGKLMILTVTQKTKNDMTVWSEEVEIEREVLLEKFINGAKEICYALRAEGYWADFIDPSSGLAFFGPYTNNTLFETDERYRHLGFSVDDLGCCKVIRHSLWGTHVVVGSIFTNATPDSHIMKKLSGN.

A mitochondrion-targeting transit peptide spans 1-38 (MANVLCNRARLVSYLPGFCSLVKRVVNPKAFSTAGSSG). Lys-203 carries the post-translational modification N6-acetyllysine.

In terms of assembly, heterodimer with MMACHC. Forms a multiprotein complex with MMACHC, MTR and MTRR. As to expression, widely expressed at high levels.

The protein localises to the cytoplasm. It is found in the mitochondrion. Its function is as follows. Involved in cobalamin metabolism and trafficking. Plays a role in regulating the biosynthesis and the proportion of two coenzymes, methylcob(III)alamin (MeCbl) and 5'-deoxyadenosylcobalamin (AdoCbl). Promotes oxidation of cob(II)alamin bound to MMACHC. The processing of cobalamin in the cytosol occurs in a multiprotein complex composed of at least MMACHC, MMADHC, MTRR (methionine synthase reductase) and MTR (methionine synthase) which may contribute to shuttle safely and efficiently cobalamin towards MTR in order to produce methionine. In Homo sapiens (Human), this protein is Cobalamin trafficking protein CblD.